The sequence spans 74 residues: Anaphase-promoting complex subunit 13 (74 aa).

A disordered region spans residues 33–53 (LNELPDPEQDNGGTTESVKEQ).

The protein belongs to the APC13 family. The mammalian APC/C is composed at least of 14 distinct subunits ANAPC1, ANAPC2, CDC27/APC3, ANAPC4, ANAPC5, CDC16/APC6, ANAPC7, CDC23/APC8, ANAPC10, ANAPC11, CDC26/APC12, ANAPC13, ANAPC15 and ANAPC16 that assemble into a complex of at least 19 chains with a combined molecular mass of around 1.2 MDa; APC/C interacts with FZR1 and FBXO5.

It is found in the nucleus. It functions in the pathway protein modification; protein ubiquitination. Its function is as follows. Component of the anaphase promoting complex/cyclosome (APC/C), a cell cycle-regulated E3 ubiquitin ligase that controls progression through mitosis and the G1 phase of the cell cycle. The APC/C complex acts by mediating ubiquitination and subsequent degradation of target proteins: it mainly mediates the formation of 'Lys-11'-linked polyubiquitin chains and, to a lower extent, the formation of 'Lys-48'- and 'Lys-63'-linked polyubiquitin chains. The APC/C complex catalyzes assembly of branched 'Lys-11'-/'Lys-48'-linked branched ubiquitin chains on target proteins. The chain is Anaphase-promoting complex subunit 13 (ANAPC13) from Pongo abelii (Sumatran orangutan).